Reading from the N-terminus, the 246-residue chain is MILFPAIDLKEGQCVRLVEGRMDSATVYSNDPGSMARLWQDQGAQYIHVVDLDGAFAGQPRNRQSIAQIVQGVQVPVQVGGGIRDLETIEDLLSLGVDRVILGSAAILKPELVAEACRKYGQRILLGIDAKDGQVAIQGWGETVKRTALDLALEMKQLGIERAVFTDIRRDGKLSGPNLAATGELARNSGLRVIASGGVASLEDIRQLKKLEQDGVEGAILGKALYTNAVKLPEALVIARGEESVC.

The active-site Proton acceptor is Asp8. Asp129 acts as the Proton donor in catalysis.

It belongs to the HisA/HisF family.

It localises to the cytoplasm. It carries out the reaction 1-(5-phospho-beta-D-ribosyl)-5-[(5-phospho-beta-D-ribosylamino)methylideneamino]imidazole-4-carboxamide = 5-[(5-phospho-1-deoxy-D-ribulos-1-ylimino)methylamino]-1-(5-phospho-beta-D-ribosyl)imidazole-4-carboxamide. Its pathway is amino-acid biosynthesis; L-histidine biosynthesis; L-histidine from 5-phospho-alpha-D-ribose 1-diphosphate: step 4/9. In Desulforamulus reducens (strain ATCC BAA-1160 / DSM 100696 / MI-1) (Desulfotomaculum reducens), this protein is 1-(5-phosphoribosyl)-5-[(5-phosphoribosylamino)methylideneamino] imidazole-4-carboxamide isomerase.